The primary structure comprises 504 residues: One cut domain family member 2 (504 aa).

4 disordered regions span residues Leu29–Ala95, Lys166–Gly189, Glu274–Glu332, and Trp485–Ala504. The span at Pro35–Gly56 shows a compositional bias: gly residues. Basic residues predominate over residues His168–Arg186. The segment at residues Val324–Ala410 is a DNA-binding region (CUT). The homeobox DNA-binding region spans Gln426–Trp485. A compositionally biased stretch (low complexity) spans Ser490–Ala504.

The protein belongs to the CUT homeobox family.

Its subcellular location is the nucleus. In terms of biological role, transcriptional activator. Activates the transcription of a number of liver genes such as HNF3B. The polypeptide is One cut domain family member 2 (ONECUT2) (Homo sapiens (Human)).